The chain runs to 379 residues: Homoserine O-acetyltransferase (379 aa).

An AB hydrolase-1 domain is found at 52-356; the sequence is NVVMVLHALT…IRGHDGFLVE (305 aa). Residue Ser-157 is the Nucleophile of the active site. Residue Arg-227 coordinates substrate. Active-site residues include Asp-320 and His-350. Substrate is bound at residue Asp-351.

The protein belongs to the AB hydrolase superfamily. MetX family. In terms of assembly, homodimer.

It localises to the cytoplasm. It carries out the reaction L-homoserine + acetyl-CoA = O-acetyl-L-homoserine + CoA. It functions in the pathway amino-acid biosynthesis; L-methionine biosynthesis via de novo pathway; O-acetyl-L-homoserine from L-homoserine: step 1/1. Functionally, transfers an acetyl group from acetyl-CoA to L-homoserine, forming acetyl-L-homoserine. This Mycobacterium ulcerans (strain Agy99) protein is Homoserine O-acetyltransferase.